The sequence spans 485 residues: Glutamyl-tRNA(Gln) amidotransferase subunit A (485 aa).

Active-site charge relay system residues include Lys79 and Ser154. Ser178 functions as the Acyl-ester intermediate in the catalytic mechanism.

This sequence belongs to the amidase family. GatA subfamily. In terms of assembly, heterotrimer of A, B and C subunits.

The catalysed reaction is L-glutamyl-tRNA(Gln) + L-glutamine + ATP + H2O = L-glutaminyl-tRNA(Gln) + L-glutamate + ADP + phosphate + H(+). Allows the formation of correctly charged Gln-tRNA(Gln) through the transamidation of misacylated Glu-tRNA(Gln) in organisms which lack glutaminyl-tRNA synthetase. The reaction takes place in the presence of glutamine and ATP through an activated gamma-phospho-Glu-tRNA(Gln). This Geobacillus stearothermophilus (Bacillus stearothermophilus) protein is Glutamyl-tRNA(Gln) amidotransferase subunit A.